A 273-amino-acid chain; its full sequence is Peptidoglycan-N-acetylglucosamine deacetylase BC_1974 (273 aa).

The chain crosses the membrane as a helical span at residues 10–30 (IVVVLIAIAAVAIGYYMFQSI). One can recognise a NodB homology domain in the interval 69 to 255 (KVAYLTFDDG…GLKEKGYEFE (187 aa)). The active-site Proton acceptor is the D76. Residues D77, H126, and H130 each contribute to the Zn(2+) site. The active-site Proton donor is H230.

It belongs to the polysaccharide deacetylase family. Zn(2+) is required as a cofactor. The cofactor is Co(2+). Ni(2+) serves as cofactor.

The protein resides in the cell membrane. The enzyme catalyses peptidoglycan-N-acetyl-D-glucosamine + H2O = peptidoglycan-D-glucosamine + acetate.. With respect to regulation, inhibited by the hydroxamate N-hydroxy-4-(naphthalene-1-yl)benzamide (NHNB). Functionally, catalyzes the deacetylation of N-acetylglucosamine (GlcNAc) residues in peptidoglycan. The sequence is that of Peptidoglycan-N-acetylglucosamine deacetylase BC_1974 from Bacillus cereus (strain ATCC 14579 / DSM 31 / CCUG 7414 / JCM 2152 / NBRC 15305 / NCIMB 9373 / NCTC 2599 / NRRL B-3711).